The chain runs to 561 residues: Nucleoprotein (561 aa).

The binding site for the cap structure m7GTP stretch occupies residues 53–237 (MRKDKRSEAD…ITQEPAQINI (185 aa)). Positions 380 and 382 each coordinate Mn(2+). Zn(2+)-binding residues include Glu390, Cys497, His500, and Cys521. Asp525 is a Mn(2+) binding site.

It belongs to the arenaviridae nucleocapsid protein family. As to quaternary structure, homomultimerizes to form the nucleocapsid. Binds to viral genomic RNA. Interacts with glycoprotein G2. Interacts with protein Z; this interaction probably directs the encapsidated genome to budding sites. Interacts with protein L; this interaction does not interfere with Z-L interaction. Interacts with host IKBKE (via Protein kinase domain); the interaction inhibits IKBKE kinase activity.

It is found in the virion. Its subcellular location is the host cytoplasm. Encapsidates the genome, protecting it from nucleases. The encapsidated genomic RNA is termed the nucleocapsid (NC). Serves as template for viral transcription and replication. The increased presence of protein N in host cell does not seem to trigger the switch from transcription to replication as observed in other negative strain RNA viruses. Through the interaction with host IKBKE, strongly inhibits the phosphorylation and nuclear translocation of host IRF3, a protein involved in interferon activation pathway, leading to the inhibition of interferon-beta and IRF3-dependent promoters activation. Also encodes a functional 3'-5' exoribonuclease that degrades preferentially dsRNA substrates and thereby participates in the suppression of interferon induction. This is Nucleoprotein from Allpahuayo mammarenavirus (isolate Rat/Peru/CLHP-2472/1997) (ALLV).